The primary structure comprises 1399 residues: DNA-directed RNA polymerase subunit beta' (1399 aa).

Zn(2+)-binding residues include Cys70, Cys72, Cys85, and Cys88. The Mg(2+) site is built by Asp460, Asp462, and Asp464. Residues Cys814, Cys888, Cys895, and Cys898 each contribute to the Zn(2+) site.

The protein belongs to the RNA polymerase beta' chain family. As to quaternary structure, the RNAP catalytic core consists of 2 alpha, 1 beta, 1 beta' and 1 omega subunit. When a sigma factor is associated with the core the holoenzyme is formed, which can initiate transcription. Mg(2+) serves as cofactor. Zn(2+) is required as a cofactor.

The enzyme catalyses RNA(n) + a ribonucleoside 5'-triphosphate = RNA(n+1) + diphosphate. Its function is as follows. DNA-dependent RNA polymerase catalyzes the transcription of DNA into RNA using the four ribonucleoside triphosphates as substrates. The polypeptide is DNA-directed RNA polymerase subunit beta' (Pseudomonas savastanoi pv. phaseolicola (strain 1448A / Race 6) (Pseudomonas syringae pv. phaseolicola (strain 1448A / Race 6))).